The chain runs to 320 residues: o-succinylbenzoate synthase (320 aa).

Residue Lys-133 is the Proton donor of the active site. Residues Asp-161, Glu-190, and Asp-213 each coordinate Mg(2+). The active-site Proton acceptor is Lys-235.

It belongs to the mandelate racemase/muconate lactonizing enzyme family. MenC type 1 subfamily. Requires a divalent metal cation as cofactor.

The catalysed reaction is (1R,6R)-6-hydroxy-2-succinyl-cyclohexa-2,4-diene-1-carboxylate = 2-succinylbenzoate + H2O. The protein operates within quinol/quinone metabolism; 1,4-dihydroxy-2-naphthoate biosynthesis; 1,4-dihydroxy-2-naphthoate from chorismate: step 4/7. Its pathway is quinol/quinone metabolism; menaquinone biosynthesis. In terms of biological role, converts 2-succinyl-6-hydroxy-2,4-cyclohexadiene-1-carboxylate (SHCHC) to 2-succinylbenzoate (OSB). The polypeptide is o-succinylbenzoate synthase (Shigella flexneri).